An 89-amino-acid polypeptide reads, in one-letter code: Small ribosomal subunit protein uS17 (89 aa).

Belongs to the universal ribosomal protein uS17 family. In terms of assembly, part of the 30S ribosomal subunit.

Functionally, one of the primary rRNA binding proteins, it binds specifically to the 5'-end of 16S ribosomal RNA. The chain is Small ribosomal subunit protein uS17 from Ralstonia nicotianae (strain ATCC BAA-1114 / GMI1000) (Ralstonia solanacearum).